The sequence spans 205 residues: Thiamine-phosphate synthase (205 aa).

Residues 36 to 40 and Asp68 each bind 4-amino-2-methyl-5-(diphosphooxymethyl)pyrimidine; that span reads QYRRK. Residues Asp69 and Asp88 each coordinate Mg(2+). Ser106 contributes to the 4-amino-2-methyl-5-(diphosphooxymethyl)pyrimidine binding site. 2-[(2R,5Z)-2-carboxy-4-methylthiazol-5(2H)-ylidene]ethyl phosphate is bound at residue 132 to 134; that stretch reads SPT. Residue Lys135 participates in 4-amino-2-methyl-5-(diphosphooxymethyl)pyrimidine binding. 2-[(2R,5Z)-2-carboxy-4-methylthiazol-5(2H)-ylidene]ethyl phosphate is bound by residues Gly162 and 182-183; that span reads IS.

This sequence belongs to the thiamine-phosphate synthase family. It depends on Mg(2+) as a cofactor.

It carries out the reaction 2-[(2R,5Z)-2-carboxy-4-methylthiazol-5(2H)-ylidene]ethyl phosphate + 4-amino-2-methyl-5-(diphosphooxymethyl)pyrimidine + 2 H(+) = thiamine phosphate + CO2 + diphosphate. The enzyme catalyses 2-(2-carboxy-4-methylthiazol-5-yl)ethyl phosphate + 4-amino-2-methyl-5-(diphosphooxymethyl)pyrimidine + 2 H(+) = thiamine phosphate + CO2 + diphosphate. It catalyses the reaction 4-methyl-5-(2-phosphooxyethyl)-thiazole + 4-amino-2-methyl-5-(diphosphooxymethyl)pyrimidine + H(+) = thiamine phosphate + diphosphate. It functions in the pathway cofactor biosynthesis; thiamine diphosphate biosynthesis; thiamine phosphate from 4-amino-2-methyl-5-diphosphomethylpyrimidine and 4-methyl-5-(2-phosphoethyl)-thiazole: step 1/1. Its function is as follows. Condenses 4-methyl-5-(beta-hydroxyethyl)thiazole monophosphate (THZ-P) and 2-methyl-4-amino-5-hydroxymethyl pyrimidine pyrophosphate (HMP-PP) to form thiamine monophosphate (TMP). The sequence is that of Thiamine-phosphate synthase from Caldivirga maquilingensis (strain ATCC 700844 / DSM 13496 / JCM 10307 / IC-167).